Reading from the N-terminus, the 884-residue chain is uncharacterized protein (884 aa).

This is an uncharacterized protein from Mycobacterium bovis (strain ATCC BAA-935 / AF2122/97).